Consider the following 375-residue polypeptide: Saccharopine dehydrogenase [NAD(+), L-lysine-forming] (375 aa).

Residues R18 and K78 each coordinate L-saccharopine. K78 acts as the Proton acceptor in catalysis. H96 acts as the Proton donor in catalysis. Q101 is a binding site for L-saccharopine. R130 lines the NAD(+) pocket. Residues R131 and F135 each contribute to the L-saccharopine site. NAD(+) contacts are provided by residues 203 to 204 (GR), D227, T231, Y252, and V279. An intrachain disulfide couples C205 to C250. L-saccharopine is bound at residue 280-282 (SAD). 322-325 (IDHL) contributes to the NAD(+) binding site.

The protein belongs to the AlaDH/PNT family. In terms of assembly, monomer.

The catalysed reaction is L-saccharopine + NAD(+) + H2O = L-lysine + 2-oxoglutarate + NADH + H(+). It functions in the pathway amino-acid biosynthesis; L-lysine biosynthesis via AAA pathway; L-lysine from L-alpha-aminoadipate (fungal route): step 3/3. Catalyzes the NAD(+)-dependent cleavage of saccharopine to L-lysine and 2-oxoglutarate, the final step in the alpha-aminoadipate (AAA) pathway for lysin biosynthesis. The sequence is that of Saccharopine dehydrogenase [NAD(+), L-lysine-forming] from Emericella nidulans (strain FGSC A4 / ATCC 38163 / CBS 112.46 / NRRL 194 / M139) (Aspergillus nidulans).